The chain runs to 245 residues: 3-deoxy-manno-octulosonate cytidylyltransferase (245 aa).

This sequence belongs to the KdsB family.

Its subcellular location is the cytoplasm. The catalysed reaction is 3-deoxy-alpha-D-manno-oct-2-ulosonate + CTP = CMP-3-deoxy-beta-D-manno-octulosonate + diphosphate. The protein operates within nucleotide-sugar biosynthesis; CMP-3-deoxy-D-manno-octulosonate biosynthesis; CMP-3-deoxy-D-manno-octulosonate from 3-deoxy-D-manno-octulosonate and CTP: step 1/1. Its pathway is bacterial outer membrane biogenesis; lipopolysaccharide biosynthesis. In terms of biological role, activates KDO (a required 8-carbon sugar) for incorporation into bacterial lipopolysaccharide in Gram-negative bacteria. The protein is 3-deoxy-manno-octulosonate cytidylyltransferase of Fusobacterium nucleatum subsp. nucleatum (strain ATCC 25586 / DSM 15643 / BCRC 10681 / CIP 101130 / JCM 8532 / KCTC 2640 / LMG 13131 / VPI 4355).